A 467-amino-acid polypeptide reads, in one-letter code: Tubulointerstitial nephritis antigen-like (467 aa).

The signal sequence occupies residues 1–21; it reads MWRCPLGLLLLLPLAGHLALG. The SMB domain maps to 50 to 98; it reads EQDLCCRGRADDCALPYLGAICYCDLFCNRTVSDCCPDFWDFCLGVPPP. Cystine bridges form between Cys-54-Cys-73, Cys-71-Cys-73, Cys-71-Cys-85, Cys-77-Cys-84, and Cys-85-Cys-92. Asn-78 carries N-linked (GlcNAc...) asparagine glycosylation. A glycan (N-linked (GlcNAc...) asparagine) is linked at Asn-161.

The protein belongs to the peptidase C1 family. In terms of processing, glycosylated. As to expression, highly expressed in aorta, heart, placenta, kidney and a colorectal adenocarcinoma cell line. Moderately expressed in skeletal muscle, pancreas, lung, lymph nodes, adrenal gland, bone marrow and thyroid. Weakly expressed in colon, small intestine, ovary, spleen, testis and prostate. Predominantly found in vascular smooth muscle cells, but also in cardiac and skeletal muscle cells as well as kidney.

The protein localises to the secreted. In terms of biological role, may be implicated in the adrenocortical zonation and in mechanisms for repressing the CYP11B1 gene expression in adrenocortical cells. This is a non catalytic peptidase C1 family protein. The sequence is that of Tubulointerstitial nephritis antigen-like (TINAGL1) from Homo sapiens (Human).